A 284-amino-acid chain; its full sequence is NH(3)-dependent NAD(+) synthetase (284 aa).

ATP is bound at residue 41 to 48 (GLSGGVDS). Residue aspartate 47 coordinates Mg(2+). A deamido-NAD(+)-binding site is contributed by arginine 127. Threonine 147 lines the ATP pocket. Position 152 (glutamate 152) interacts with Mg(2+). Residue aspartate 167 coordinates deamido-NAD(+). 2 residues coordinate ATP: lysine 176 and serine 199. Residues 264–284 (FKRRPAPGLDLPEPEDPAMSG) are disordered. Positions 275–284 (PEPEDPAMSG) are enriched in acidic residues.

This sequence belongs to the NAD synthetase family. In terms of assembly, homodimer.

The enzyme catalyses deamido-NAD(+) + NH4(+) + ATP = AMP + diphosphate + NAD(+) + H(+). It functions in the pathway cofactor biosynthesis; NAD(+) biosynthesis; NAD(+) from deamido-NAD(+) (ammonia route): step 1/1. Its function is as follows. Catalyzes the ATP-dependent amidation of deamido-NAD to form NAD. Uses ammonia as a nitrogen source. This chain is NH(3)-dependent NAD(+) synthetase, found in Methanopyrus kandleri (strain AV19 / DSM 6324 / JCM 9639 / NBRC 100938).